Reading from the N-terminus, the 160-residue chain is Large ribosomal subunit protein bL17 (160 aa).

The segment covering Asp123 to Gln141 has biased composition (basic and acidic residues). Residues Asp123–Glu160 are disordered. Positions Lys142–Gly152 are enriched in low complexity.

The protein belongs to the bacterial ribosomal protein bL17 family. Part of the 50S ribosomal subunit. Contacts protein L32.

This is Large ribosomal subunit protein bL17 from Acidobacterium capsulatum (strain ATCC 51196 / DSM 11244 / BCRC 80197 / JCM 7670 / NBRC 15755 / NCIMB 13165 / 161).